A 614-amino-acid polypeptide reads, in one-letter code: Sorting nexin-18 (614 aa).

The 61-residue stretch at 1–61 (MALRARALYD…PASYVQVIRA (61 aa)) folds into the SH3 domain. The tract at residues 85–218 (GFEPLPAAPP…SQELGHGEPQ (134 aa)) is disordered. Residues 90–101 (PAAPPAAFPPLL) show a composition bias toward pro residues. Acidic residues predominate over residues 141–151 (SDDDWDDEWDD). In terms of domain architecture, PX spans 266 to 376 (FQCTIDDPTK…HFLTCPSSTD (111 aa)). Positions 302, 304, and 342 each coordinate a 1,2-diacyl-sn-glycero-3-phospho-(1D-myo-inositol-4,5-bisphosphate). Positions 411–614 (LQEVESKIDG…EEALHKYDSV (204 aa)) constitute a BAR domain.

Belongs to the sorting nexin family. As to quaternary structure, heterodimer with SNX9. Interacts with ITCH. Interacts with dynamin-2 (DNM2), SYNJ1 and WASL. Interacts with the AP-1 complex. Interacts with FCHSD1 (via the F-BAR domain).

It is found in the endomembrane system. The protein localises to the endosome membrane. Its subcellular location is the recycling endosome membrane. The protein resides in the cell membrane. It localises to the cytoplasmic vesicle membrane. Its function is as follows. Involved in endocytosis and intracellular vesicle trafficking, both during interphase and at the end of mitosis. Required for efficient progress through mitosis and cytokinesis. Required for normal formation of the cleavage furrow at the end of mitosis. Plays a role in endocytosis via clathrin-coated pits, but also clathrin-independent, actin-dependent fluid-phase endocytosis. Plays a role in macropinocytosis. Binds to membranes enriched in phosphatidylinositol 4,5-bisphosphate and promotes membrane tubulation. Stimulates the GTPase activity of DNM2. Promotes DNM2 location at the plasma membrane. Together with DNM2, involved in autophagosome assembly by regulating trafficking from recycling endosomes of phospholipid scramblase ATG9A. In Mus musculus (Mouse), this protein is Sorting nexin-18.